The following is a 275-amino-acid chain: Phosphate import ATP-binding protein PstB 1 (275 aa).

The ABC transporter domain occupies 22–261 (IETRDLSVYY…DRTEKIFNSP (240 aa)). ATP is bound at residue 54–61 (GPSGCGKS).

It belongs to the ABC transporter superfamily. Phosphate importer (TC 3.A.1.7) family. The complex is composed of two ATP-binding proteins (PstB), two transmembrane proteins (PstC and PstA) and a solute-binding protein (PstS).

It localises to the cell inner membrane. It carries out the reaction phosphate(out) + ATP + H2O = ADP + 2 phosphate(in) + H(+). In terms of biological role, part of the ABC transporter complex PstSACB involved in phosphate import. Responsible for energy coupling to the transport system. This Synechococcus sp. (strain JA-3-3Ab) (Cyanobacteria bacterium Yellowstone A-Prime) protein is Phosphate import ATP-binding protein PstB 1.